A 166-amino-acid chain; its full sequence is Large ribosomal subunit protein uL10 (166 aa).

Belongs to the universal ribosomal protein uL10 family. As to quaternary structure, part of the ribosomal stalk of the 50S ribosomal subunit. The N-terminus interacts with L11 and the large rRNA to form the base of the stalk. The C-terminus forms an elongated spine to which L12 dimers bind in a sequential fashion forming a multimeric L10(L12)X complex.

Its function is as follows. Forms part of the ribosomal stalk, playing a central role in the interaction of the ribosome with GTP-bound translation factors. This is Large ribosomal subunit protein uL10 from Bacillus mycoides (strain KBAB4) (Bacillus weihenstephanensis).